The chain runs to 135 residues: 6-pyruvoyl tetrahydrobiopterin synthase (135 aa).

H17 lines the Zn(2+) pocket. C36 functions as the Proton acceptor in the catalytic mechanism. The Zn(2+) site is built by H40 and H42. Catalysis depends on charge relay system residues H81 and E124.

It belongs to the PTPS family. Homohexamer formed of two homotrimers in a head to head fashion. It depends on Zn(2+) as a cofactor.

The enzyme catalyses 7,8-dihydroneopterin 3'-triphosphate = 6-pyruvoyl-5,6,7,8-tetrahydropterin + triphosphate + H(+). It functions in the pathway cofactor biosynthesis; tetrahydrobiopterin biosynthesis; tetrahydrobiopterin from 7,8-dihydroneopterin triphosphate: step 1/3. Functionally, involved in the biosynthesis of tetrahydrobiopterin, an essential cofactor of aromatic amino acid hydroxylases. Catalyzes the transformation of 7,8-dihydroneopterin triphosphate into 6-pyruvoyl tetrahydropterin. This chain is 6-pyruvoyl tetrahydrobiopterin synthase (ptsA), found in Dictyostelium discoideum (Social amoeba).